A 116-amino-acid polypeptide reads, in one-letter code: Large ribosomal subunit protein uL18 (116 aa).

The protein belongs to the universal ribosomal protein uL18 family. As to quaternary structure, part of the 50S ribosomal subunit; part of the 5S rRNA/L5/L18/L25 subcomplex. Contacts the 5S and 23S rRNAs.

Functionally, this is one of the proteins that bind and probably mediate the attachment of the 5S RNA into the large ribosomal subunit, where it forms part of the central protuberance. The sequence is that of Large ribosomal subunit protein uL18 from Shewanella frigidimarina (strain NCIMB 400).